Here is a 405-residue protein sequence, read N- to C-terminus: Neisseria adhesin A (405 aa).

Residues 1-23 (MKHFPSKVLTTAILATFCSGALA) form the signal peptide. Residues 24-87 (ATNDDDVKKA…ADDFKGLGLK (64 aa)) are head domain. Coiled coils occupy residues 87-170 (KKVV…KLEA) and 181-329 (AFND…LRKE). The coiled stalk domain stretch occupies residues 88 to 350 (KVVTNLTKTV…SGLFQPYNVG (263 aa)). Residues 312–350 (HDTRLNGLDKTVSDLRKETRQGLAEQAALSGLFQPYNVG) are outer membrane translocation of the passenger domain. A run of 4 beta stranded transmembrane segments spans residues 350-360 (GRFNVTAAVGG), 364-375 (ESAVAIGTGFRF), 382-388 (KAGVAVG), and 394-405 (SAAYHVGVNYEW). The translocator domain stretch occupies residues 351-405 (RFNVTAAVGGYKSESAVAIGTGFRFTENFAAKAGVAVGTSSGSSAAYHVGVNYEW).

It belongs to the autotransporter-2 (AT-2) (TC 1.B.40) family. The non-membrane anchored protein (residues 24-350) probably forms a homotrimer; it is assumed the mature protein forms trimers in situ. The mature protein without the membrane-targeting segment (residues 24-350) binds to human heat shock 90 beta protein (HSP90AB1) both in vitro and when incubated with human monocytes. A subsequent paper showed binding of the same fragment in epithelial cells to both HSP90AA1 and HSP90AB1; in vitro the interaction is stabilized by ADP and the Hsp90 inhibitor 17-AAG (17-N-allylamino-17-demethoxygeldanamycin), in vitro and in vivo both interactions are inhibited by ATP. Binds human oxidized low-density lipoprotein receptor 1 (LOX-1, OLR1) in protein microarrays, in solution and when LOX-1 is expressed on the cell surface. Binds via the head and the beginning of the coiled stalk (residues 24-170); binding can be abrogated by monoclonal antibodies against those specific regions of NadA. Other potential binding partners were identified but not characterized in the same study. Forms high molecular weight oligomers in whole cell extracts that are not disrupted by boiling in SDS buffer.

It localises to the cell outer membrane. The protein resides in the cell surface. Adheres to and induces bacterial uptake by human epithelial cells in a microfilament-dependent process. Binding is reduced by pronase treatment, suggesting there is a protein receptor on the human cells. Possible human protein receptors include integrin beta-1 (ITGB1) and oxidized low-density lipoprotein receptor 1 (OLR1). Binds to extracellular human Hsp90 (preferentially the beta isoform, HSP90AB1) on monocytes, binding stimulates monocytes in a TLR4-dependent fashion, polymixin B, which binds NadA, blocks the activation. Hsp90 is probably not the first receptor on human monocytes. Non-membrane anchored protein (residues 24-350) is internalized into human epithelial cells by hijacking the endosome recycling pathway and may be recycled back to the cell surface, which might aid transcellular trafficking of the bacteria. A bacterial cell surface protein; antisera against this protein induce complement-mediated killing of this and other strains. This is Neisseria adhesin A from Neisseria meningitidis serogroup B.